A 57-amino-acid polypeptide reads, in one-letter code: UPF0391 membrane protein IL0696 (57 aa).

2 helical membrane-spanning segments follow: residues 4 to 24 (WVLIFLAVAVVAAILGFGGIA) and 28 to 48 (AGIAKIIFYIFIILFAISLVV).

It belongs to the UPF0391 family.

It localises to the cell membrane. The chain is UPF0391 membrane protein IL0696 from Idiomarina loihiensis (strain ATCC BAA-735 / DSM 15497 / L2-TR).